We begin with the raw amino-acid sequence, 297 residues long: GATA transcription factor 24 (297 aa).

One can recognise a Tify domain in the interval glycine 73–glycine 108. The region spanning arginine 143 to alanine 185 is the CCT domain. The disordered stretch occupies residues lysine 178 to glutamine 203. Residues aspartate 190 to serine 201 are compositionally biased toward low complexity. A GATA-type zinc finger spans residues glutamine 213–glutamine 269.

This sequence belongs to the type IV zinc-finger family. Class C subfamily. As to expression, predominantly expressed in shoot apices, inflorescences and roots.

Its subcellular location is the nucleus. In terms of biological role, transcriptional activator that specifically binds 5'-GATA-3' or 5'-GAT-3' motifs within gene promoters. In Arabidopsis thaliana (Mouse-ear cress), this protein is GATA transcription factor 24 (GATA24).